A 260-amino-acid polypeptide reads, in one-letter code: MQKDYQKLIVYLCDFLEKEVQKRGFKKVVYGLSGGLDSAVVGVLCQKVFKENAHALLMPSSVSMPENKTDALNLCEKFSIPYTEYSIAPYDAIFSSHFKDASLTRKGNFCARLRMAFLYDYSLKSDSLVIGTSNKSERMLGYGTLFGDLACAINPIGELFKTEVYELARRLNIPKKILNKPPSADLFVGQSDEKDLGYPYSVIDPLLKDIEALFQTKPIDTETLAQLGYDEILVKNITSRIQKNAFKLELPAIAKRFNPE.

31–38 (GLSGGLDS) is an ATP binding site. Residue Asp37 participates in Mg(2+) binding. Arg112 contacts deamido-NAD(+). Thr132 is a binding site for ATP. Glu137 is a binding site for Mg(2+). ATP contacts are provided by Lys161 and Ser183.

This sequence belongs to the NAD synthetase family. Homodimer.

The enzyme catalyses deamido-NAD(+) + NH4(+) + ATP = AMP + diphosphate + NAD(+) + H(+). It participates in cofactor biosynthesis; NAD(+) biosynthesis; NAD(+) from deamido-NAD(+) (ammonia route): step 1/1. In terms of biological role, catalyzes the ATP-dependent amidation of deamido-NAD to form NAD. Uses ammonia as a nitrogen source. This Helicobacter pylori (strain ATCC 700392 / 26695) (Campylobacter pylori) protein is NH(3)-dependent NAD(+) synthetase.